We begin with the raw amino-acid sequence, 368 residues long: 3-isopropylmalate dehydrogenase (368 aa).

An NAD(+)-binding site is contributed by 79-92 (GPRYEGLPWDLRPE). Arg-99, Arg-109, Arg-138, and Asp-228 together coordinate substrate. Residues Asp-228, Asp-252, and Asp-256 each contribute to the Mg(2+) site. 292 to 304 (GSAPDIAGQDRAN) provides a ligand contact to NAD(+).

This sequence belongs to the isocitrate and isopropylmalate dehydrogenases family. LeuB type 1 subfamily. In terms of assembly, homodimer. It depends on Mg(2+) as a cofactor. Requires Mn(2+) as cofactor.

The protein localises to the cytoplasm. The catalysed reaction is (2R,3S)-3-isopropylmalate + NAD(+) = 4-methyl-2-oxopentanoate + CO2 + NADH. It functions in the pathway amino-acid biosynthesis; L-leucine biosynthesis; L-leucine from 3-methyl-2-oxobutanoate: step 3/4. Functionally, catalyzes the oxidation of 3-carboxy-2-hydroxy-4-methylpentanoate (3-isopropylmalate) to 3-carboxy-4-methyl-2-oxopentanoate. The product decarboxylates to 4-methyl-2 oxopentanoate. This Symbiobacterium thermophilum (strain DSM 24528 / JCM 14929 / IAM 14863 / T) protein is 3-isopropylmalate dehydrogenase.